Reading from the N-terminus, the 111-residue chain is Nucleoid-associated protein lhv_0401 (111 aa).

This sequence belongs to the YbaB/EbfC family. In terms of assembly, homodimer.

It localises to the cytoplasm. The protein localises to the nucleoid. In terms of biological role, binds to DNA and alters its conformation. May be involved in regulation of gene expression, nucleoid organization and DNA protection. In Lactobacillus helveticus (strain DPC 4571), this protein is Nucleoid-associated protein lhv_0401.